The primary structure comprises 173 residues: RNA pyrophosphohydrolase (173 aa).

Residues 11 to 164 (PYRKCVGILV…KKHVYTQVVK (154 aa)) enclose the Nudix hydrolase domain. Residues 52 to 73 (GGINQGEKPIDAARRELYEETG) carry the Nudix box motif.

The protein belongs to the Nudix hydrolase family. RppH subfamily. The cofactor is a divalent metal cation.

Functionally, accelerates the degradation of transcripts by removing pyrophosphate from the 5'-end of triphosphorylated RNA, leading to a more labile monophosphorylated state that can stimulate subsequent ribonuclease cleavage. In Bartonella clarridgeiae, this protein is RNA pyrophosphohydrolase.